The chain runs to 878 residues: Probable glucan endo-1,3-beta-glucosidase ARB_02077 (878 aa).

The N-terminal stretch at 1–27 (MARGLVSSLLLGQLLLVLVGLFSPAGA) is a signal peptide. N-linked (GlcNAc...) asparagine glycans are attached at residues Asn-228, Asn-257, Asn-290, and Asn-297. The tract at residues 373 to 472 (AGSGSKAKRL…TACPSAPVTK (100 aa)) is disordered. A compositionally biased stretch (pro residues) spans 400-416 (APAPQPPAQSTAPPYPI). Residues 433-452 (VPTRVPTGGVPSGTTGTAPS) show a composition bias toward low complexity. Residues Asn-505, Asn-659, Asn-795, and Asn-862 are each glycosylated (N-linked (GlcNAc...) asparagine).

The protein belongs to the glycosyl hydrolase 55 family.

It is found in the secreted. It catalyses the reaction Hydrolysis of (1-&gt;3)-beta-D-glucosidic linkages in (1-&gt;3)-beta-D-glucans.. Its function is as follows. Probable glucan endo-1,3-beta-glucosidase involved in the hydrolysis of fungal cell wall. Classified as a small-oligosaccharide-producing type based its the end products: glucose, laminaribiose or laminaritetraose. The chain is Probable glucan endo-1,3-beta-glucosidase ARB_02077 from Arthroderma benhamiae (strain ATCC MYA-4681 / CBS 112371) (Trichophyton mentagrophytes).